We begin with the raw amino-acid sequence, 618 residues long: Zinc finger protein 48 (618 aa).

At Met1 the chain carries N-acetylmethionine. Basic and acidic residues-rich tracts occupy residues 1-22 (MERA…EPQR) and 39-51 (EFEH…DLGF). 2 disordered regions span residues 1 to 51 (MERA…DLGF) and 78 to 109 (LWVQ…ASSD). Lys87 participates in a covalent cross-link: Glycyl lysine isopeptide (Lys-Gly) (interchain with G-Cter in SUMO2). 2 consecutive C2H2-type zinc fingers follow at residues 112 to 134 (AVCG…QRTH) and 140 to 162 (YKCG…QRTH). The tract at residues 157 to 189 (KHQRTHSGEKPYRARPPAQGPPKIPRSRIPAGE) is disordered. Lys179 participates in a covalent cross-link: Glycyl lysine isopeptide (Lys-Gly) (interchain with G-Cter in SUMO2). C2H2-type zinc fingers lie at residues 192-214 (TICG…QRTH) and 220-242 (YKCG…QRTH). Positions 235-271 (RIKHQRTHRGEQPPRPVVPRRQPSRAATAATQGPKAQ) are disordered. Lys269 participates in a covalent cross-link: Glycyl lysine isopeptide (Lys-Gly) (interchain with G-Cter in SUMO2). 2 consecutive C2H2-type zinc fingers follow at residues 275–297 (YICT…QRSH) and 303–325 (FGCD…LRVH). A Glycyl lysine isopeptide (Lys-Gly) (interchain with G-Cter in SUMO2) cross-link involves residue Lys329. 2 consecutive C2H2-type zinc fingers follow at residues 331–353 (YLCP…LRTH) and 359–381 (HACP…RLTH). Residues 392-414 (YPLPALIPSPPPPPLGTSPPLTP) are compositionally biased toward pro residues. The tract at residues 392-457 (YPLPALIPSP…DKPHKCPECG (66 aa)) is disordered. The span at 415 to 432 (RSPSHSGEPFGLPGLEPE) shows a compositional bias: low complexity. The C2H2-type 9 zinc-finger motif lies at 451 to 473 (HKCPECGKGFRRSSDLVKHHRVH). Residue Lys477 forms a Glycyl lysine isopeptide (Lys-Gly) (interchain with G-Cter in SUMO2) linkage. A C2H2-type 10 zinc finger spans residues 479–501 (YLCPECGKGFADSSARVKHLRTH). A disordered region spans residues 500–540 (THRGERARPPPPSTLLRPHNPPGPVPMAPRPRVRAQPSGPS). Residues 508–528 (PPPPSTLLRPHNPPGPVPMAP) are compositionally biased toward pro residues. C2H2-type zinc fingers lie at residues 543–565 (HVCG…RRTH) and 571–593 (YKCA…QRGH). A Glycyl lysine isopeptide (Lys-Gly) (interchain with G-Cter in SUMO2) cross-link involves residue Lys610.

Belongs to the krueppel C2H2-type zinc-finger protein family.

The protein resides in the nucleus. In terms of biological role, may be involved in transcriptional regulation. The polypeptide is Zinc finger protein 48 (ZNF48) (Homo sapiens (Human)).